A 400-amino-acid chain; its full sequence is Telomeric repeat-binding factor 2-interacting protein 1 (400 aa).

Ala2 is modified (N-acetylalanine). Phosphoserine occurs at positions 36 and 43. In terms of domain architecture, BRCT spans 78 to 101 (FISTQYILDCVERNERLELEAYRL). Positions 105–126 (SAADTGSEAKPGALAEGAAEPE) are disordered. A compositionally biased stretch (low complexity) spans 112 to 125 (EAKPGALAEGAAEP). Lys114 is covalently cross-linked (Glycyl lysine isopeptide (Lys-Gly) (interchain with G-Cter in SUMO2)). The 61-residue stretch at 128 to 188 (QRLAGRIAFT…SLKDRYLKHL (61 aa)) folds into the Myb-like domain. Phosphoserine occurs at positions 154 and 156. A Glycyl lysine isopeptide (Lys-Gly) (interchain with G-Cter in SUMO2) cross-link involves residue Lys194. Disordered regions lie at residues 196 to 244 (LLGD…EEIQ) and 264 to 311 (VVVD…SQPE). Ser203 and Ser206 each carry phosphoserine. Residues Lys208, Lys212, and Lys240 each participate in a glycyl lysine isopeptide (Lys-Gly) (interchain with G-Cter in SUMO2) cross-link. Over residues 280-305 (CDDDPPTPEEDSETQPDEEEEEEEEE) the composition is skewed to acidic residues. Lys373 participates in a covalent cross-link: Glycyl lysine isopeptide (Lys-Gly) (interchain with G-Cter in SUMO2). Positions 384-400 (KKFGAQNVARRIEFRKK) match the Nuclear localization signal motif.

This sequence belongs to the RAP1 family. Associates with the I-kappa-B-kinase (IKK) core complex, composed of CHUK, IKBKB and IKBKG. Homodimer. Component of the shelterin complex (telosome) composed of TERF1, TERF2, TINF2, TERF2IP ACD and POT1. Interacts with TERF2 (but not TERF1) with its C-terminus. Interacts with SLX4/BTBD12. Interacts with TERF2; the interaction is direct.

It localises to the nucleus. It is found in the cytoplasm. Its subcellular location is the chromosome. The protein localises to the telomere. In terms of biological role, acts both as a regulator of telomere function and as a transcription regulator. Involved in the regulation of telomere length and protection as a component of the shelterin complex (telosome). In contrast to other components of the shelterin complex, it is dispensible for telomere capping and does not participate in the protection of telomeres against non-homologous end-joining (NHEJ)-mediated repair. Instead, it is required to negatively regulate telomere recombination and is essential for repressing homology-directed repair (HDR), which can affect telomere length. Does not bind DNA directly: recruited to telomeric double-stranded 5'-TTAGGG-3' repeats via its interaction with TERF2. Independently of its function in telomeres, also acts as a transcription regulator: recruited to extratelomeric 5'-TTAGGG-3' sites via its association with TERF2 or other factors, and regulates gene expression. When cytoplasmic, associates with the I-kappa-B-kinase (IKK) complex and acts as a regulator of the NF-kappa-B signaling by promoting IKK-mediated phosphorylation of RELA/p65, leading to activate expression of NF-kappa-B target genes. This is Telomeric repeat-binding factor 2-interacting protein 1 (TERF2IP) from Macaca fascicularis (Crab-eating macaque).